The sequence spans 2207 residues: Kinetochore-associated protein 1 (2207 aa).

T13 is modified (phosphothreonine). S15 is modified (phosphoserine). The disordered stretch occupies residues 1024–1045 (EAAQAEHKHRGPPGPTPARGTH).

In terms of assembly, interacts with ZW10. This interaction is required for stable association with the kinetochore. Component of the RZZ complex composed of KNTC1/ROD, ZW10 and ZWILCH.

The protein resides in the cytoplasm. The protein localises to the nucleus. It is found in the chromosome. It localises to the centromere. Its subcellular location is the kinetochore. The protein resides in the cytoskeleton. The protein localises to the spindle. Its function is as follows. Essential component of the mitotic checkpoint, which prevents cells from prematurely exiting mitosis. Required for the assembly of the dynein-dynactin and MAD1-MAD2 complexes onto kinetochores. Its function related to the spindle assembly machinery is proposed to depend on its association in the mitotic RZZ complex. This chain is Kinetochore-associated protein 1 (Kntc1), found in Mus musculus (Mouse).